A 478-amino-acid chain; its full sequence is Pathogenicity cluster 5 protein d (478 aa).

The signal sequence occupies residues 1–19 (MQIQNLIAALAGMAVVAEA). Disordered regions lie at residues 35–89 (RQNK…GQAN) and 299–400 (NGGK…GGKG). Residues 38-64 (KGGNNNNNNNNNNNNNNNNNKNNGGNN) are compositionally biased toward low complexity. Over residues 65 to 89 (QLCLNPNNVQKGSQQAGTPKQGQAN) the composition is skewed to polar residues. Gly residues predominate over residues 316-326 (NNDGGGGGNDG). 2 stretches are compositionally biased toward low complexity: residues 327-348 (GNNSANNSGSGNKQGGKQQNGA) and 379-393 (TQAGGSASNSATNGN). 2 N-linked (GlcNAc...) asparagine glycosylation sites follow: N328 and N332.

It is found in the secreted. In terms of biological role, secreted protein required for appressorial penetration of intact host epidermal cells and for pathogenicit, but not for subsequent biotrophic and necrotrophic colonization of leaves. In Colletotrichum graminicola (strain M1.001 / M2 / FGSC 10212) (Maize anthracnose fungus), this protein is Pathogenicity cluster 5 protein d.